Here is a 231-residue protein sequence, read N- to C-terminus: Acyltransferase PGAP2 (231 aa).

Over M1–R22 the chain is Cytoplasmic. A helical membrane pass occupies residues L23–M43. Over L44 to R78 the chain is Lumenal. Residues F79–Y99 form a helical membrane-spanning segment. At R100–Q110 the chain is on the cytoplasmic side. The chain crosses the membrane as a helical span at residues L111–T131. At Y132–F146 the chain is on the lumenal side. A helical transmembrane segment spans residues I147 to I167. Topologically, residues V168–S179 are cytoplasmic. The chain crosses the membrane as a helical span at residues Y180–F200. At Y201–T231 the chain is on the lumenal side.

It belongs to the PGAP2 family.

The protein resides in the golgi apparatus membrane. Involved in the fatty acid remodeling steps of GPI-anchor maturation where the unsaturated acyl chain at sn-2 of inositol phosphate is replaced by a saturated stearoyl chain. May catalyze the second step of the fatty acid remodeling, by reacylating a lyso-GPI intermediate at sn-2 of inositol phosphate by a saturated chain. The fatty acid remodeling steps is critical for the integration of GPI-APs into lipid rafts. The chain is Acyltransferase PGAP2 from Danio rerio (Zebrafish).